The sequence spans 823 residues: DNA topoisomerase 4 subunit A (823 aa).

Residues 30-496 (LPDIRDGLKP…KAIEIDTASL (467 aa)) form the Topo IIA-type catalytic domain. Y118 serves as the catalytic O-(5'-phospho-DNA)-tyrosine intermediate.

The protein belongs to the type II topoisomerase GyrA/ParC subunit family. ParC type 2 subfamily. Heterotetramer composed of ParC and ParE.

Its subcellular location is the cell membrane. The enzyme catalyses ATP-dependent breakage, passage and rejoining of double-stranded DNA.. With respect to regulation, inhibited by quinolones, such as levofloxacin. Topoisomerase IV is essential for chromosome segregation. It relaxes supercoiled DNA. Performs the decatenation events required during the replication of a circular DNA molecule. The polypeptide is DNA topoisomerase 4 subunit A (Streptococcus pneumoniae serotype 4 (strain ATCC BAA-334 / TIGR4)).